Reading from the N-terminus, the 439-residue chain is Tol-Pal system protein TolB (439 aa).

A signal peptide spans 1-22 (MKKPLRWLAALTVLLLPLSALA).

This sequence belongs to the TolB family. In terms of assembly, the Tol-Pal system is composed of five core proteins: the inner membrane proteins TolA, TolQ and TolR, the periplasmic protein TolB and the outer membrane protein Pal. They form a network linking the inner and outer membranes and the peptidoglycan layer.

The protein resides in the periplasm. In terms of biological role, part of the Tol-Pal system, which plays a role in outer membrane invagination during cell division and is important for maintaining outer membrane integrity. The sequence is that of Tol-Pal system protein TolB from Xanthomonas oryzae pv. oryzae (strain MAFF 311018).